The following is a 295-amino-acid chain: Polyisoprenoid diphosphate/phosphate phosphohydrolase PLPP6 (295 aa).

Disordered regions lie at residues 1 to 39 and 61 to 90; these read MPSPRRSMEGRPLGVSASSSSSSPGSPAHGGGGGGSRFE and SESPVHRRGSFPLAAAGPSQSPAPPLPEED. The Cytoplasmic segment spans residues 1 to 132; it reads MPSPRRSMEG…ESSSWGSVRP (132 aa). Over residues 16–27 the composition is skewed to low complexity; that stretch reads SASSSSSSPGSP. Phosphoserine occurs at positions 26, 36, and 70. Residues 133–153 form a helical membrane-spanning segment; that stretch reads LMKLLEISGHGIPWLLGTLYC. Over 154 to 164 the chain is Lumenal; sequence LCRSDSWAGRE. The helical transmembrane segment at 165-185 threads the bilayer; it reads VLMNLLFALLLDLLLVALIKG. Positions 184–192 are phosphatase sequence motif I; the sequence is KGLVRRRRP. At 186–228 the chain is on the cytoplasmic side; sequence LVRRRRPAHNQMDMFVTLSVDKYSFPSGHATRAALMSRFILNH. The segment at 211-214 is phosphatase sequence motif II; it reads PSGH. H214 (proton donors) is an active-site residue. The helical transmembrane segment at 229–249 threads the bilayer; it reads LVLAIPLRVLVVLWAFVLGLS. Residues 249–260 form a phosphatase sequence motif III region; the sequence is SRVMLGRHNVTD. At 250–260 the chain is on the lumenal side; it reads RVMLGRHNVTD. H256 (nucleophile) is an active-site residue. Residues 261–281 traverse the membrane as a helical segment; sequence VAFGFFLGYMQYSIVDYCWLS. Residues 282 to 295 lie on the Cytoplasmic side of the membrane; sequence PHNAPVLFLLWSQR.

It belongs to the PA-phosphatase related phosphoesterase family. Post-translationally, phosphorylation by PKC activates the phosphatase activity towards presqualene diphosphate. In terms of tissue distribution, widely expressed. Expressed in most organs, in particular gastrointestinal organs, spleen, placenta, kidney, thymus and brain.

The protein resides in the endoplasmic reticulum membrane. It is found in the nucleus envelope. It localises to the nucleus inner membrane. The enzyme catalyses presqualene diphosphate + H2O = presqualene phosphate + phosphate + H(+). It catalyses the reaction presqualene phosphate + H2O = presqualene alcohol + phosphate. The catalysed reaction is (2E,6E)-farnesyl diphosphate + H2O = (2E,6E)-farnesyl phosphate + phosphate + H(+). It carries out the reaction (2E,6E)-farnesyl phosphate + H2O = (2E,6E)-farnesol + phosphate. The enzyme catalyses (2E,6E,10E)-geranylgeranyl diphosphate + H2O = (2E,6E,10E)-geranylgeranyl phosphate + phosphate + H(+). It catalyses the reaction (2E,6E,10E)-geranylgeranyl phosphate + H2O = (2E,6E,10E)-geranylgeraniol + phosphate. The catalysed reaction is (2E)-geranyl diphosphate + H2O = (2E)-geranyl phosphate + phosphate + H(+). It carries out the reaction (2E)-geranyl phosphate + H2O = (2E)-geraniol + phosphate. The enzyme catalyses 1,2-dihexadecanoyl-sn-glycero-3-phosphate + H2O = 1,2-dihexadecanoyl-sn-glycerol + phosphate. With respect to regulation, inhibited by propranolol. Not inhibited by N-ethylmaleimide or bromoenolactome. In terms of biological role, magnesium-independent polyisoprenoid diphosphatase that catalyzes the sequential dephosphorylation of presqualene, farnesyl, geranyl and geranylgeranyl diphosphates. Functions in the innate immune response through the dephosphorylation of presqualene diphosphate which acts as a potent inhibitor of the signaling pathways contributing to polymorphonuclear neutrophils activation. May regulate the biosynthesis of cholesterol and related sterols by dephosphorylating presqualene and farnesyl diphosphate, two key intermediates in this biosynthetic pathway. May also play a role in protein prenylation by acting on farnesyl diphosphate and its derivative geranylgeranyl diphosphate, two precursors for the addition of isoprenoid anchors to membrane proteins. Has a lower activity towards phosphatidic acid (PA), but through phosphatidic acid dephosphorylation may participate in the biosynthesis of phospholipids and triacylglycerols. May also act on ceramide-1-P, lysophosphatidic acid (LPA) and sphing-4-enine 1-phosphate/sphingosine-1-phosphate. This chain is Polyisoprenoid diphosphate/phosphate phosphohydrolase PLPP6, found in Homo sapiens (Human).